The sequence spans 693 residues: Elongation factor G 1 (693 aa).

A tr-type G domain is found at 4-281; it reads NKLRNIGISA…AVTRFLPSPH (278 aa). GTP-binding positions include 13–20, 80–84, and 134–137; these read AHIDSGKT, DTPGH, and NKCD.

Belongs to the TRAFAC class translation factor GTPase superfamily. Classic translation factor GTPase family. EF-G/EF-2 subfamily.

The protein resides in the cytoplasm. Functionally, catalyzes the GTP-dependent ribosomal translocation step during translation elongation. During this step, the ribosome changes from the pre-translocational (PRE) to the post-translocational (POST) state as the newly formed A-site-bound peptidyl-tRNA and P-site-bound deacylated tRNA move to the P and E sites, respectively. Catalyzes the coordinated movement of the two tRNA molecules, the mRNA and conformational changes in the ribosome. In Borreliella afzelii (strain PKo) (Borrelia afzelii), this protein is Elongation factor G 1.